We begin with the raw amino-acid sequence, 627 residues long: Pescadillo homolog (627 aa).

The BRCT domain occupies 321-414; sequence RLRTLFKGLK…QLLPTNKYFI (94 aa). Disordered regions lie at residues 436–471, 489–562, and 596–627; these read PEEK…AVDQ, YKKY…LQAR, and FEAG…KLGK. Phosphoserine occurs at positions 453 and 457. 2 stretches are compositionally biased toward acidic residues: residues 453–471 and 498–521; these read SDDD…AVDQ and VNED…EELD. Over residues 522–533 the composition is skewed to basic and acidic residues; the sequence is EQAKRLKEEKQK. Positions 540–549 are enriched in basic residues; sequence KVHKVNKRQL. Composition is skewed to basic and acidic residues over residues 550-559 and 596-605; these read HKAEVDEHRL and FEAGEKEARK. The span at 616–627 shows a compositional bias: low complexity; that stretch reads AAAAAKASKLGK.

This sequence belongs to the pescadillo family.

The protein localises to the nucleus. It localises to the nucleolus. Its subcellular location is the nucleoplasm. Functionally, required for maturation of ribosomal RNAs and formation of the large ribosomal subunit. The sequence is that of Pescadillo homolog from Drosophila ananassae (Fruit fly).